Consider the following 874-residue polypeptide: Alanine--tRNA ligase (874 aa).

4 residues coordinate Zn(2+): H562, H566, C664, and H668.

It belongs to the class-II aminoacyl-tRNA synthetase family. The cofactor is Zn(2+).

It is found in the cytoplasm. It catalyses the reaction tRNA(Ala) + L-alanine + ATP = L-alanyl-tRNA(Ala) + AMP + diphosphate. In terms of biological role, catalyzes the attachment of alanine to tRNA(Ala) in a two-step reaction: alanine is first activated by ATP to form Ala-AMP and then transferred to the acceptor end of tRNA(Ala). Also edits incorrectly charged Ser-tRNA(Ala) and Gly-tRNA(Ala) via its editing domain. In Shewanella denitrificans (strain OS217 / ATCC BAA-1090 / DSM 15013), this protein is Alanine--tRNA ligase.